We begin with the raw amino-acid sequence, 1528 residues long: Intraflagellar transport protein 121 (1528 aa).

WD repeat units lie at residues 123-170 (SNRA…GSAP), 244-285 (SSMP…SSVS), 619-667 (PSLT…SEFL), and 759-798 (PELI…REDS). The disordered stretch occupies residues 914–933 (DSGLDVTASNSSQPSTQTSQ). A compositionally biased stretch (low complexity) spans 920-933 (TASNSSQPSTQTSQ).

It is found in the cell projection. It localises to the cilium. Its subcellular location is the flagellum. The protein localises to the cytoplasm. The protein resides in the cytoskeleton. It is found in the flagellum axoneme. It localises to the flagellum basal body. Functionally, component of the intraflagellar transport complex A (IFT-A) involved in flagellar assembly. The sequence is that of Intraflagellar transport protein 121 from Giardia intestinalis (strain ATCC 50803 / WB clone C6) (Giardia lamblia).